The following is a 645-amino-acid chain: UvrABC system protein C (645 aa).

Positions 1 to 20 are disordered; the sequence is MTDLPPHSSHHPADQGEPLV. A GIY-YIG domain is found at 40-118; it reads YSPGVYRMLS…IKRMKPRFNI (79 aa). Residues 228–263 enclose the UVR domain; the sequence is TELQQRLVAEMEQASQELNYERAASIRDRIRGFASI.

The protein belongs to the UvrC family. Interacts with UvrB in an incision complex.

The protein resides in the cytoplasm. The UvrABC repair system catalyzes the recognition and processing of DNA lesions. UvrC both incises the 5' and 3' sides of the lesion. The N-terminal half is responsible for the 3' incision and the C-terminal half is responsible for the 5' incision. This Gluconobacter oxydans (strain 621H) (Gluconobacter suboxydans) protein is UvrABC system protein C.